A 178-amino-acid polypeptide reads, in one-letter code: ATP synthase subunit delta (178 aa).

This sequence belongs to the ATPase delta chain family. F-type ATPases have 2 components, F(1) - the catalytic core - and F(0) - the membrane proton channel. F(1) has five subunits: alpha(3), beta(3), gamma(1), delta(1), epsilon(1). F(0) has three main subunits: a(1), b(2) and c(10-14). The alpha and beta chains form an alternating ring which encloses part of the gamma chain. F(1) is attached to F(0) by a central stalk formed by the gamma and epsilon chains, while a peripheral stalk is formed by the delta and b chains.

It is found in the cell membrane. Its function is as follows. F(1)F(0) ATP synthase produces ATP from ADP in the presence of a proton or sodium gradient. F-type ATPases consist of two structural domains, F(1) containing the extramembraneous catalytic core and F(0) containing the membrane proton channel, linked together by a central stalk and a peripheral stalk. During catalysis, ATP synthesis in the catalytic domain of F(1) is coupled via a rotary mechanism of the central stalk subunits to proton translocation. In terms of biological role, this protein is part of the stalk that links CF(0) to CF(1). It either transmits conformational changes from CF(0) to CF(1) or is implicated in proton conduction. The chain is ATP synthase subunit delta from Streptococcus pyogenes serotype M3 (strain SSI-1).